Reading from the N-terminus, the 944-residue chain is Serine/threonine-protein kinase PLK4 (944 aa).

One can recognise a Protein kinase domain in the interval 12-265; the sequence is FKVLNLLGKG…LSSVLDHAFM (254 aa). Residues 18–26 and lysine 41 each bind ATP; that span reads LGKGSFACV. Aspartate 136 serves as the catalytic Proton acceptor. 3 disordered regions span residues 327–396, 432–463, and 530–561; these read KDKH…YSER, RSLE…RSND, and LGIK…QQAF. Over residues 378-394 the composition is skewed to polar residues; the sequence is RSGTSQSQTYAKPSSYS. Over residues 432–447 the composition is skewed to basic and acidic residues; the sequence is RSLERHTSPPVKEKTP. A compositionally biased stretch (polar residues) spans 548-561; the sequence is FGEQSKSRVPQQAF. Positions 565–678 constitute a Cryptic POLO box 1 (CPB1) domain; that stretch reads TLRSIISPLN…AKFIKLVRSK (114 aa). The 113-residue stretch at 679–791 folds into the Cryptic POLO box 2 (CPB2) domain; sequence TPKVTYYTRY…GRRPALAESP (113 aa). Residues 786–809 form a disordered region; that stretch reads ALAESPKTQPTPSVDSARERKEEQ. In terms of domain architecture, POLO box spans 862-940; the sequence is QVLKSVFVEN…LSSILMLFAS (79 aa).

It belongs to the protein kinase superfamily. Ser/Thr protein kinase family. CDC5/Polo subfamily. Homodimer. Ubiquitinated; leading to its degradation by the proteasome.

It localises to the cytoplasm. The protein resides in the cytoskeleton. Its subcellular location is the microtubule organizing center. The protein localises to the centrosome. It is found in the centriole. The enzyme catalyses L-seryl-[protein] + ATP = O-phospho-L-seryl-[protein] + ADP + H(+). It carries out the reaction L-threonyl-[protein] + ATP = O-phospho-L-threonyl-[protein] + ADP + H(+). In terms of biological role, serine/threonine-protein kinase that plays a central role in centriole duplication. Able to trigger procentriole formation on the surface of the parental centriole cylinder, leading to the recruitment of centriole biogenesis proteins such as sass6, cpap, ccp110, cep135 and gamma-tubulin. When overexpressed, it is able to induce centrosome amplification through the simultaneous generation of multiple procentrioles adjoining each parental centriole during S phase. Its central role in centriole replication suggests a possible role in tumorigenesis, centrosome aberrations being frequently observed in tumors. Also involved in deuterosome-mediated centriole amplification in multiciliated that can generate more than 100 centrioles. The polypeptide is Serine/threonine-protein kinase PLK4 (Xenopus laevis (African clawed frog)).